The primary structure comprises 80 residues: Raniseptin-2 (80 aa).

The N-terminal stretch at 1–22 (MAFLKKSLFLVLFLGIVSLSIC) is a signal peptide. Positions 23-49 (EEEKRVGEEEEKQEEENEELSEEELRE) are excised as a propeptide. The interval 27–46 (RVGEEEEKQEEENEELSEEE) is disordered. Over residues 30 to 44 (EEEEKQEEENEELSE) the composition is skewed to acidic residues.

Belongs to the frog skin active peptide (FSAP) family. Dermaseptin subfamily. Expressed by the skin glands.

It is found in the secreted. Functionally, has antibacterial activity. In Boana raniceps (Chaco tree frog), this protein is Raniseptin-2.